Here is a 187-residue protein sequence, read N- to C-terminus: NADH-quinone oxidoreductase subunit B (187 aa).

The segment covering 1–10 (MTADHNRALH) has biased composition (basic and acidic residues). The interval 1 to 22 (MTADHNRALHDAPTARGGEVRQ) is disordered. The [4Fe-4S] cluster site is built by Cys-66, Cys-67, Cys-131, and Cys-161.

It belongs to the complex I 20 kDa subunit family. In terms of assembly, NDH-1 is composed of 14 different subunits. Subunits NuoB, C, D, E, F, and G constitute the peripheral sector of the complex. It depends on [4Fe-4S] cluster as a cofactor.

It localises to the cell inner membrane. It catalyses the reaction a quinone + NADH + 5 H(+)(in) = a quinol + NAD(+) + 4 H(+)(out). Functionally, NDH-1 shuttles electrons from NADH, via FMN and iron-sulfur (Fe-S) centers, to quinones in the respiratory chain. Couples the redox reaction to proton translocation (for every two electrons transferred, four hydrogen ions are translocated across the cytoplasmic membrane), and thus conserves the redox energy in a proton gradient. This Erythrobacter litoralis (strain HTCC2594) protein is NADH-quinone oxidoreductase subunit B.